The following is a 91-amino-acid chain: YcgL domain-containing protein Ent638_2370 (91 aa).

A YcgL domain is found at methionine 1 to leucine 85.

This Enterobacter sp. (strain 638) protein is YcgL domain-containing protein Ent638_2370.